The sequence spans 104 residues: Histone H4 (104 aa).

The interval 1–21 (MAGRGKVGKGYGKVGAKRHTK) is disordered.

This sequence belongs to the histone H4 family. In terms of assembly, the nucleosome is a histone octamer containing two molecules each of H2A, H2B, H3 and H4 assembled in one H3-H4 heterotetramer and two H2A-H2B heterodimers. The octamer wraps approximately 147 bp of DNA.

Its subcellular location is the nucleus. It localises to the chromosome. Its function is as follows. Core component of nucleosome. Nucleosomes wrap and compact DNA into chromatin, limiting DNA accessibility to the cellular machineries which require DNA as a template. Histones thereby play a central role in transcription regulation, DNA repair, DNA replication and chromosomal stability. DNA accessibility is regulated via a complex set of post-translational modifications of histones, also called histone code, and nucleosome remodeling. This chain is Histone H4, found in Sterkiella nova (Ciliate).